Here is a 256-residue protein sequence, read N- to C-terminus: Sec-independent protein translocase protein TatC (256 aa).

6 helical membrane-spanning segments follow: residues 25–45 (VICV…IYHF), 77–97 (AIVA…AFIA), 117–137 (ILFY…VFSF), 158–178 (FALA…AIIL), 195–215 (PYII…DVFS), and 217–237 (TLLA…ARFY).

This sequence belongs to the TatC family. As to quaternary structure, the Tat system comprises two distinct complexes: a TatABC complex, containing multiple copies of TatA, TatB and TatC subunits, and a separate TatA complex, containing only TatA subunits. Substrates initially bind to the TatABC complex, which probably triggers association of the separate TatA complex to form the active translocon.

The protein localises to the cell inner membrane. Functionally, part of the twin-arginine translocation (Tat) system that transports large folded proteins containing a characteristic twin-arginine motif in their signal peptide across membranes. Together with TatB, TatC is part of a receptor directly interacting with Tat signal peptides. The chain is Sec-independent protein translocase protein TatC from Haemophilus influenzae (strain ATCC 51907 / DSM 11121 / KW20 / Rd).